A 361-amino-acid chain; its full sequence is Mycothiol acetyltransferase (361 aa).

N-acetyltransferase domains follow at residues 25-173 (PRVR…LPGS) and 195-361 (VTVL…AWKF). 1D-myo-inositol 2-(L-cysteinylamino)-2-deoxy-alpha-D-glucopyranoside is bound at residue Glu59. Acetyl-CoA is bound at residue 98 to 100 (LAV). 1D-myo-inositol 2-(L-cysteinylamino)-2-deoxy-alpha-D-glucopyranoside contacts are provided by Glu229, Lys280, and Glu295. Acetyl-CoA is bound by residues 299-301 (IGL) and 306-312 (QGRGLGR). Tyr333 contributes to the 1D-myo-inositol 2-(L-cysteinylamino)-2-deoxy-alpha-D-glucopyranoside binding site. 338 to 343 (NAPAVH) is a binding site for acetyl-CoA.

It belongs to the acetyltransferase family. MshD subfamily. Monomer.

The catalysed reaction is 1D-myo-inositol 2-(L-cysteinylamino)-2-deoxy-alpha-D-glucopyranoside + acetyl-CoA = mycothiol + CoA + H(+). Catalyzes the transfer of acetyl from acetyl-CoA to desacetylmycothiol (Cys-GlcN-Ins) to form mycothiol. The polypeptide is Mycothiol acetyltransferase (Corynebacterium kroppenstedtii (strain DSM 44385 / JCM 11950 / CIP 105744 / CCUG 35717)).